The primary structure comprises 1032 residues: Probable LRR receptor-like serine/threonine-protein kinase At1g56130 (1032 aa).

The signal sequence occupies residues M1–S29. Residues Q30–G636 lie on the Extracellular side of the membrane. N31, N61, and N95 each carry an N-linked (GlcNAc...) asparagine glycan. LRR repeat units follow at residues I101–L122, T123–L146, R148–L170, T171–C194, K196–N217, W242–N265, M290–H314, S315–L338, Q340–T360, and Q361–S385. The N-linked (GlcNAc...) asparagine glycan is linked to N145. N182 carries N-linked (GlcNAc...) asparagine glycosylation. 5 N-linked (GlcNAc...) asparagine glycosylation sites follow: N265, N302, N337, N348, and N352. N-linked (GlcNAc...) asparagine glycans are attached at residues N394, N580, and N633. Residues T637–F657 form a helical membrane-spanning segment. Residues T658–R1032 lie on the Cytoplasmic side of the membrane. T683 bears the Phosphothreonine mark. A Protein kinase domain is found at F694–I968. Residues L700–V708 and K722 each bind ATP. A Phosphotyrosine modification is found at Y767. Residue D818 is the Proton acceptor of the active site. Residues S822 and S851 each carry the phosphoserine modification. T852 and T857 each carry phosphothreonine. Y865 bears the Phosphotyrosine mark. The tract at residues A1008–R1032 is disordered.

This sequence belongs to the protein kinase superfamily. Ser/Thr protein kinase family.

Its subcellular location is the cell membrane. The enzyme catalyses L-seryl-[protein] + ATP = O-phospho-L-seryl-[protein] + ADP + H(+). It catalyses the reaction L-threonyl-[protein] + ATP = O-phospho-L-threonyl-[protein] + ADP + H(+). The chain is Probable LRR receptor-like serine/threonine-protein kinase At1g56130 from Arabidopsis thaliana (Mouse-ear cress).